A 180-amino-acid polypeptide reads, in one-letter code: Large ribosomal subunit protein uL22 (180 aa).

Disordered stretches follow at residues Met-1 to Arg-20 and Pro-160 to Ala-180. The span at Lys-8–Arg-20 shows a compositional bias: polar residues.

Belongs to the universal ribosomal protein uL22 family.

This chain is Large ribosomal subunit protein uL22 (rpl17), found in Dictyostelium discoideum (Social amoeba).